A 491-amino-acid chain; its full sequence is UDP-N-acetylmuramoyl-L-alanyl-D-glutamate--2,6-diaminopimelate ligase (491 aa).

Residue S30 participates in UDP-N-acetyl-alpha-D-muramoyl-L-alanyl-D-glutamate binding. Residue 108-114 (GTNGKTT) participates in ATP binding. UDP-N-acetyl-alpha-D-muramoyl-L-alanyl-D-glutamate contacts are provided by residues N149, 150–151 (TT), S177, Q183, and R185. Position 217 is an N6-carboxylysine (K217). Residues R383, 407–410 (DNPR), G458, and E462 contribute to the meso-2,6-diaminopimelate site. The Meso-diaminopimelate recognition motif motif lies at 407-410 (DNPR).

Belongs to the MurCDEF family. MurE subfamily. Requires Mg(2+) as cofactor. In terms of processing, carboxylation is probably crucial for Mg(2+) binding and, consequently, for the gamma-phosphate positioning of ATP.

The protein resides in the cytoplasm. It carries out the reaction UDP-N-acetyl-alpha-D-muramoyl-L-alanyl-D-glutamate + meso-2,6-diaminopimelate + ATP = UDP-N-acetyl-alpha-D-muramoyl-L-alanyl-gamma-D-glutamyl-meso-2,6-diaminopimelate + ADP + phosphate + H(+). The protein operates within cell wall biogenesis; peptidoglycan biosynthesis. Catalyzes the addition of meso-diaminopimelic acid to the nucleotide precursor UDP-N-acetylmuramoyl-L-alanyl-D-glutamate (UMAG) in the biosynthesis of bacterial cell-wall peptidoglycan. The sequence is that of UDP-N-acetylmuramoyl-L-alanyl-D-glutamate--2,6-diaminopimelate ligase from Listeria innocua serovar 6a (strain ATCC BAA-680 / CLIP 11262).